The primary structure comprises 548 residues: Kinetochore and Eb1-associated basic protein (548 aa).

2 disordered regions span residues 1–51 (MSSM…PKHP) and 82–181 (YRSS…IRPK). Composition is skewed to basic and acidic residues over residues 20 to 29 (RTKELLERQR), 104 to 116 (RTWEGPKTPEFRS), and 127 to 141 (PRPRRAKELLEDLRS). Positions 100 to 253 (QNRQRTWEGP…TTSKRKLDFK (154 aa)) are important for kinetochore and microtubule localization. Positions 144–155 (QGTPATKIPSQR) are enriched in polar residues. Residues 149-152 (TKIP) carry the SXIP motif 1 motif. Basic and acidic residues predominate over residues 156-165 (NPKENQELSK). Positions 166–175 (SHTCIPSSEP) are enriched in polar residues. Positions 168 to 171 (TCIP) match the SXIP motif 2 motif. The CH (calponin-homology)-like region, which is not required for kinetochore and microtubule localization stretch occupies residues 237-372 (SDKGIKLTTS…MCALPVVSEK (136 aa)). Residues 386-457 (YDVMSLQQKF…LQLQRLRLQE (72 aa)) adopt a coiled-coil conformation.

In terms of assembly, interacts with Eb1 via the two SxIP motifs; the interaction is not required for kebab kinetochore localization.

Its subcellular location is the cytoplasm. The protein localises to the perinuclear region. It localises to the chromosome. The protein resides in the centromere. It is found in the kinetochore. Its subcellular location is the cytoskeleton. The protein localises to the spindle. This chain is Kinetochore and Eb1-associated basic protein, found in Drosophila melanogaster (Fruit fly).